Reading from the N-terminus, the 475-residue chain is Ribulose bisphosphate carboxylase large chain (475 aa).

Positions 1-2 are excised as a propeptide; that stretch reads MA. Proline 3 is modified (N-acetylproline). An N6,N6,N6-trimethyllysine modification is found at lysine 14. The substrate site is built by asparagine 123 and threonine 173. Catalysis depends on lysine 175, which acts as the Proton acceptor. Lysine 177 is a substrate binding site. Residues lysine 201, aspartate 203, and glutamate 204 each coordinate Mg(2+). Lysine 201 carries the N6-carboxylysine modification. Histidine 294 functions as the Proton acceptor in the catalytic mechanism. Substrate-binding residues include arginine 295, histidine 327, and serine 379.

The protein belongs to the RuBisCO large chain family. Type I subfamily. In terms of assembly, heterohexadecamer of 8 large chains and 8 small chains; disulfide-linked. The disulfide link is formed within the large subunit homodimers. Requires Mg(2+) as cofactor. In terms of processing, the disulfide bond which can form in the large chain dimeric partners within the hexadecamer appears to be associated with oxidative stress and protein turnover.

It localises to the plastid. The protein localises to the chloroplast. It carries out the reaction 2 (2R)-3-phosphoglycerate + 2 H(+) = D-ribulose 1,5-bisphosphate + CO2 + H2O. It catalyses the reaction D-ribulose 1,5-bisphosphate + O2 = 2-phosphoglycolate + (2R)-3-phosphoglycerate + 2 H(+). Functionally, ruBisCO catalyzes two reactions: the carboxylation of D-ribulose 1,5-bisphosphate, the primary event in carbon dioxide fixation, as well as the oxidative fragmentation of the pentose substrate in the photorespiration process. Both reactions occur simultaneously and in competition at the same active site. The sequence is that of Ribulose bisphosphate carboxylase large chain from Tupiella akineta (Green alga).